A 515-amino-acid polypeptide reads, in one-letter code: Bifunctional solanapyrone synthase (515 aa).

An N-terminal signal peptide occupies residues Met1–Arg25. A glycan (N-linked (GlcNAc...) asparagine) is linked at Asn66. Residues Ala91 to Leu261 form the FAD-binding PCMH-type domain. Residue His128 is modified to Pros-8alpha-FAD histidine. N-linked (GlcNAc...) asparagine glycosylation is found at Asn274 and Asn355.

Belongs to the oxygen-dependent FAD-linked oxidoreductase family. Requires FAD as cofactor.

The enzyme catalyses prosolanapyrone II + O2 = prosolanapyrone III + H2O2. It carries out the reaction prosolanapyrone III = (-)-solanapyrone A. The catalysed reaction is prosolanapyrone III = solanapyrone D. It functions in the pathway phytotoxin biosynthesis. Functionally, bifunctional solanapyrone synthase; part of the gene cluster that mediates the biosynthesis of the phytotoxin solanapyrone, a causal agent of early blight disease of potato and tomato. The prosolanapyrone synthase sol1 is a polyketide synthase that produces the octaketide desmethylprosolanapyrone I via sequential condensations of 7 malonyl-CoA units with one acetyl-CoA unit, and one methylation step. The octaketide backbone is further methylated by the sol2 O-methyltransferase to yield prosolanapyrone I. Prosolanapyrone I is hydroxylated to prosolanapyrone II by the cytochrome P450 monooxygenase sol6. The solanapyrone synthase sol5 then catalyzes the oxidation of prosolanapyrone II and the subsequent Diels Alder cycloisomerization of the product prosolanapyrone III to solanapyrones A and D. Solanapyrones A and D are then converted into solanapyrones B and E, respectively, by the sol3 dehydrogenase. The chain is Bifunctional solanapyrone synthase (sol5) from Alternaria solani.